Here is a 299-residue protein sequence, read N- to C-terminus: Probable lipid kinase YegS-like (299 aa).

In terms of domain architecture, DAGKc spans Ser2–Thr133. ATP is bound by residues Thr40, Gly66–Glu72, and Thr95. The Mg(2+) site is built by Leu215, Asp218, and Leu220. Glu271 acts as the Proton acceptor in catalysis.

Belongs to the diacylglycerol/lipid kinase family. YegS lipid kinase subfamily. The cofactor is Mg(2+). Ca(2+) serves as cofactor.

It localises to the cytoplasm. Its function is as follows. Probably phosphorylates lipids; the in vivo substrate is unknown. This Cronobacter sakazakii (strain ATCC BAA-894) (Enterobacter sakazakii) protein is Probable lipid kinase YegS-like.